Reading from the N-terminus, the 348-residue chain is Fe-S cluster assembly protein DRE2 (348 aa).

The tract at residues 1–162 (MSQYKTGLLL…KKASSSTSNL (162 aa)) is N-terminal SAM-like domain. The segment at 137-170 (KTNNTKLQSGSKLPTFKKASSSTSNLPSFKKADH) is disordered. The span at 144-163 (QSGSKLPTFKKASSSTSNLP) shows a compositional bias: polar residues. Positions 163 to 242 (PSFKKADHSR…EEELIDEDGS (80 aa)) are linker. At S206 the chain carries Phosphoserine. [2Fe-2S] cluster is bound by residues C252, C263, C266, and C268. Residues 252–268 (CGKSKTKKKKACKDCTC) form a fe-S binding site A region. 4 residues coordinate [4Fe-4S] cluster: C311, C314, C322, and C325. 2 consecutive short sequence motifs (cx2C motif) follow at residues 311-314 (CGSC) and 322-325 (CSGC). The interval 311–325 (CGSCSLGDAFRCSGC) is fe-S binding site B.

The protein belongs to the anamorsin family. In terms of assembly, monomer. Interacts with TAH18. Interacts with MIA40. [2Fe-2S] cluster serves as cofactor. Requires [4Fe-4S] cluster as cofactor.

It is found in the cytoplasm. Its subcellular location is the mitochondrion intermembrane space. In terms of biological role, component of the cytosolic iron-sulfur (Fe-S) protein assembly (CIA) machinery required for the maturation of extramitochondrial Fe-S proteins. Part of an electron transfer chain functioning in an early step of cytosolic Fe-S biogenesis, facilitating the de novo assembly of a [4Fe-4S] cluster on the scaffold complex CFD1-NBP35. Electrons are transferred to DRE2 from NADPH via the FAD- and FMN-containing protein TAH18. TAH18-DRE2 are also required for the assembly of the diferric tyrosyl radical cofactor of ribonucleotide reductase (RNR), probably by providing electrons for reduction during radical cofactor maturation in the catalytic small subunit RNR2. The protein is Fe-S cluster assembly protein DRE2 of Saccharomyces cerevisiae (strain Lalvin EC1118 / Prise de mousse) (Baker's yeast).